Reading from the N-terminus, the 264-residue chain is Ribosomal protein L11 methyltransferase (264 aa).

Positions 116, 137, 159, and 200 each coordinate S-adenosyl-L-methionine.

Belongs to the methyltransferase superfamily. PrmA family.

The protein resides in the cytoplasm. It catalyses the reaction L-lysyl-[protein] + 3 S-adenosyl-L-methionine = N(6),N(6),N(6)-trimethyl-L-lysyl-[protein] + 3 S-adenosyl-L-homocysteine + 3 H(+). Methylates ribosomal protein L11. This chain is Ribosomal protein L11 methyltransferase, found in Thermotoga petrophila (strain ATCC BAA-488 / DSM 13995 / JCM 10881 / RKU-1).